The sequence spans 75 residues: Small ribosomal subunit protein bS18 (75 aa).

This sequence belongs to the bacterial ribosomal protein bS18 family. In terms of assembly, part of the 30S ribosomal subunit. Forms a tight heterodimer with protein bS6.

Functionally, binds as a heterodimer with protein bS6 to the central domain of the 16S rRNA, where it helps stabilize the platform of the 30S subunit. The sequence is that of Small ribosomal subunit protein bS18 from Baumannia cicadellinicola subsp. Homalodisca coagulata.